Reading from the N-terminus, the 251-residue chain is L-ascorbate peroxidase 2, cytosolic (251 aa).

The active-site Proton acceptor is His-43. The disordered stretch occupies residues 113–137 (EVPFHPGRQDKPEPPPEGRLPDATQ). A compositionally biased stretch (basic and acidic residues) spans 119 to 132 (GRQDKPEPPPEGRL). Residue His-164 coordinates heme b. K(+) is bound by residues Thr-165, Thr-181, Asn-183, Ile-186, and Asp-188.

It belongs to the peroxidase family. Ascorbate peroxidase subfamily. The cofactor is heme b. As to expression, expressed in aerial vegetative parts and reproductive organs. Expressed in roots, leaves, stems and flowers. Expressed in young leaves, internodes, blade ears, stems and anthers.

It is found in the cytoplasm. It carries out the reaction L-ascorbate + H2O2 = L-dehydroascorbate + 2 H2O. Its activity is regulated as follows. Inhibited by p-chloromercuriphenylsulfonic acid (CMPSA). In terms of biological role, plays a key role in hydrogen peroxide removal. Plays an important role in plant growth and development by protecting the seedlings from abiotic stresses through scavenging reactive oxygen species. Required for pollen viability. The chain is L-ascorbate peroxidase 2, cytosolic from Oryza sativa subsp. japonica (Rice).